A 444-amino-acid chain; its full sequence is C4-dicarboxylate transport protein (444 aa).

A run of 8 helical transmembrane segments spans residues 7–29 (LYKS…GHFY), 44–66 (IKLI…IAGM), 79–101 (ALLY…VNVV), 143–165 (IVGA…FGFA), 186–208 (VMFN…AMAF), 221–243 (LGQL…LGAI), 291–313 (VVGL…YLTM), and 353–375 (FIVL…ALIL). Residues 418–444 (SGGRAISDTREEDDLGVAEGPTPTTVK) are disordered.

This sequence belongs to the dicarboxylate/amino acid:cation symporter (DAACS) (TC 2.A.23) family.

It is found in the cell inner membrane. In terms of biological role, responsible for the transport of dicarboxylates such as succinate, fumarate, and malate from the periplasm across the inner membrane. The protein is C4-dicarboxylate transport protein of Pseudomonas chlororaphis (Pseudomonas aureofaciens).